The following is a 445-amino-acid chain: UPF0210 protein SSU05_0296 (445 aa).

Belongs to the UPF0210 family. Homodimer.

The chain is UPF0210 protein SSU05_0296 from Streptococcus suis (strain 05ZYH33).